The sequence spans 180 residues: Adenine phosphoribosyltransferase (180 aa).

This sequence belongs to the purine/pyrimidine phosphoribosyltransferase family. As to quaternary structure, homodimer.

The protein localises to the cytoplasm. It carries out the reaction AMP + diphosphate = 5-phospho-alpha-D-ribose 1-diphosphate + adenine. The protein operates within purine metabolism; AMP biosynthesis via salvage pathway; AMP from adenine: step 1/1. In terms of biological role, catalyzes a salvage reaction resulting in the formation of AMP, that is energically less costly than de novo synthesis. This chain is Adenine phosphoribosyltransferase, found in Butyrivibrio fibrisolvens.